The chain runs to 400 residues: Endophilin-B2 (400 aa).

Position 1 is an N-acetylmethionine (M1). A membrane-binding amphipathic helix region spans residues 1–27 (MDFNMKKLASDAGIFFTRAVQFTEEKF). S10 carries the phosphoserine modification. The BAR domain maps to 24–287 (EEKFGQAEKT…LGSSQGAIFP (264 aa)). A coiled-coil region spans residues 205 to 234 (SASALWNDEVDKAEQELRVAQTEFDRQAEV). An SH3 domain is found at 340-400 (SGTRKARVLY…VPVTYLELLS (61 aa)). Position 400 is a phosphoserine (S400).

The protein belongs to the endophilin family. In terms of assembly, homodimer, and heterodimer with SH3GLB1.

It localises to the cytoplasm. The polypeptide is Endophilin-B2 (Sh3glb2) (Mus musculus (Mouse)).